Reading from the N-terminus, the 350-residue chain is S-adenosylmethionine:tRNA ribosyltransferase-isomerase (350 aa).

The protein belongs to the QueA family. As to quaternary structure, monomer.

It localises to the cytoplasm. The catalysed reaction is 7-aminomethyl-7-carbaguanosine(34) in tRNA + S-adenosyl-L-methionine = epoxyqueuosine(34) in tRNA + adenine + L-methionine + 2 H(+). Its pathway is tRNA modification; tRNA-queuosine biosynthesis. Functionally, transfers and isomerizes the ribose moiety from AdoMet to the 7-aminomethyl group of 7-deazaguanine (preQ1-tRNA) to give epoxyqueuosine (oQ-tRNA). This is S-adenosylmethionine:tRNA ribosyltransferase-isomerase from Vibrio campbellii (strain ATCC BAA-1116).